Consider the following 499-residue polypeptide: Neuropeptide CCHamide-1 receptor (499 aa).

The Extracellular portion of the chain corresponds to 1–85 (MIANLVSMET…GRRPETYIVP (85 aa)). Residues asparagine 33 and asparagine 61 are each glycosylated (N-linked (GlcNAc...) asparagine). The helical transmembrane segment at 86–106 (ILFALIFVVGVLGNGTLIVVF) threads the bilayer. Topologically, residues 107–117 (LSVRQMRNVPN) are cytoplasmic. The chain crosses the membrane as a helical span at residues 118–138 (TYILSLALADLLVIITTVPLA). At 139–162 (STVYTVEYWPYGSFLCSLSEFMKD) the chain is on the extracellular side. Cysteine 154 and cysteine 240 form a disulfide bridge. The helical transmembrane segment at 163–183 (VSIGVSVFTLTALSGDRYFAI) threads the bilayer. Topologically, residues 184–203 (VDPLRKFHAHGGGRRATRMT) are cytoplasmic. Residues 204–224 (LATAVSIWLLAILCGLPALIG) traverse the membrane as a helical segment. At 225–259 (SNLKHLGINEKSIVICYPYPEEWGINYAKSMVLLH) the chain is on the extracellular side. A helical transmembrane segment spans residues 260–280 (FLVYYAIPLVVIAVFYVLIAL). At 281–309 (HLMYSASVPGEIQGAVRQVRARRKVAVTV) the chain is on the cytoplasmic side. Residues 310–330 (LAFVVIFGICFLPYHVFFLWF) traverse the membrane as a helical segment. Over 331–348 (YFWPTAQDDYNAFWHVLR) the chain is Extracellular. Residues 349 to 369 (IVAYCMSFANSCANPVALYFV) traverse the membrane as a helical segment. Residues 370-499 (SGAFRKHFNR…PAKFQESLLN (130 aa)) lie on the Cytoplasmic side of the membrane.

Belongs to the G-protein coupled receptor 1 family. In terms of tissue distribution, low levels in larval brain and gut with higher levels in adult brain and gut. In the brain expression is widely distributed, including strong expression in the mushroom bodies. Expressed weakly in s-LNv (small ventral lateral neurons) and strongly in l-LNv (large ventral lateral neurons), but not in other clock neurons.

It localises to the cell membrane. In terms of biological role, receptor for the neuropeptide CCHamide-1. Plays a role in the modulation of starvation-induced olfactory behavior where starved flies show increased responsiveness to food odorants, repellants and pheromones. Contributes to regulation of sleep latency (the time required to fall asleep), amount of sleep and depth of sleep (arousability). Involved in modulation of PDP1 and PDF levels in s-LNv (small ventral lateral neurons) clock neurons in response to CCHa1 released by DN1a (anterior dorsal neurons 1) clock neurons, to regulate morning activity. In a subset of dopaminergic cells in the protocerebral anterior medial (PAM) cluster involved in suppressing arousability in response to CCHa1 secreted by gut enteroendocrine cells. The protein is Neuropeptide CCHamide-1 receptor of Drosophila melanogaster (Fruit fly).